Here is a 364-residue protein sequence, read N- to C-terminus: Sorbitol dehydrogenase (364 aa).

C54 provides a ligand contact to Zn(2+). Y60 is a binding site for substrate. H79 and E80 together coordinate Zn(2+). E165 contacts substrate. NAD(+) contacts are provided by residues I193, D213, R218, 284–286 (VGM), and 308–310 (VFR). Substrate contacts are provided by R310 and Y311.

It belongs to the zinc-containing alcohol dehydrogenase family. Homotetramer. Zn(2+) is required as a cofactor. As to expression, mostly expressed in dry seeds and leaves, and, to a lower extent, in roots, stems, flowers and siliques (at protein level).

The protein localises to the mitochondrion membrane. It localises to the cell membrane. It is found in the cytoplasm. The protein resides in the cytosol. The enzyme catalyses keto-D-fructose + NADH + H(+) = D-sorbitol + NAD(+). The catalysed reaction is ribitol + NAD(+) = D-ribulose + NADH + H(+). It catalyses the reaction xylitol + NAD(+) = D-xylulose + NADH + H(+). Polyol dehydrogenase that catalyzes the NAD(+)-dependent oxidation of various sugar alcohols. Is mostly active with D-sorbitol (D-glucitol), ribitol and xylitol as substrates, leading to the C2-oxidized products D-fructose, D-ribulose and D-xylulose, respectively. To a lesser extent, can also oxidize arabitol, mannitol, lactitol and maltitol in vitro. Is required for sorbitol metabolism. Cannot use NADP(+) as the electron acceptor. The polypeptide is Sorbitol dehydrogenase (SDH) (Arabidopsis thaliana (Mouse-ear cress)).